The chain runs to 336 residues: Nuclear egress protein 2 (336 aa).

Topologically, residues 1–315 (MASPEERLLD…AWRYSWRATP (315 aa)) are perinuclear space. Disordered regions lie at residues 193–221 (RSGQVEDTGARVTGGGGPRPGVTHSGCLG) and 277–297 (RTRETRRMRGSHSRVEHVPPE). A compositionally biased stretch (basic residues) spans 277-288 (RTRETRRMRGSH). The helical transmembrane segment at 316 to 333 (YLARVLAVTAVALLLMFL) threads the bilayer. Topologically, residues 334–336 (RWT) are nuclear.

This sequence belongs to the herpesviridae NEC2 protein family. Forms a heterodimeric viral nuclear egress complex (NEC) with NEC1. Interacts with host IKBKE; this interaction inhibits host IKBKE kinase activity and IRF3 nuclear translocation. Post-translationally, phosphorylated.

Its subcellular location is the host nucleus inner membrane. The protein resides in the host cytoplasm. The protein localises to the host perinuclear region. In terms of biological role, plays an essential role in virion nuclear egress, the first step of virion release from infected cell. Within the host nucleus, NEC1 interacts with the newly formed capsid through the vertexes and directs it to the inner nuclear membrane by associating with NEC2. Induces the budding of the capsid at the inner nuclear membrane as well as its envelopment into the perinuclear space. There, the NEC1/NEC2 complex promotes the fusion of the enveloped capsid with the outer nuclear membrane and the subsequent release of the viral capsid into the cytoplasm where it will reach the secondary budding sites in the host Golgi or trans-Golgi network. Inhibits host IKBKE and IRF3, thereby impairing type I IFN signaling. This Homo sapiens (Human) protein is Nuclear egress protein 2.